We begin with the raw amino-acid sequence, 837 residues long: MTQVTVKELAQVVDTPVERLLLQMRDAGLPHTSAEQVVTDSEKQALLTHLKGSHGDRASEPRKITLQRKTTTTLKVGGSKTVSVEVRKKKTYVKRSPDEIEAERQRELEEQRAAEEAERLKAEEAAARQRAEEEARKAEEAARAKAAEEAVSAQPAAAVEVAAAEPVAKPAAAEERKKEEPRRVPKRDEDDERRDRKHTQHRPSVKEKEKAPAPRVAPRSTDEESDGYRRGGRGGKSKLKKRNQHGFQNPTGPIVREVNIGETITVAELAAQMSVKGAEVVKFMFKMGSPVTINQVLDQETAQLVAEELGHKVKLVSENALEEQLAESLKFEGEAVTRAPVVTVMGHVDHGKTSLLDYIRRAKVAAGEAGGITQHIGAYHVETERGMVTFLDTPGHAAFTAMRARGAQATDIVILVVAADDGVMPQTQEAVQHAKAAGVPIVVAVNKIDKPEANPDNIKNGLAALDVIPEEWGGDAPFVPVSAKLGTGVDELLEAVLLQAEVLELKATPSAPGRGVVVESRLDKGRGPVATVLVQDGTLRQGDMVLVGINYGRVRAMLDENGKPIKEAGPSIPVEILGLDGTPDAGDEMTVVADEKKAREVALFRQGKFREVKLARAHAGKLENIFENMGQEEKKTLNIVLKADVRGSLEALQGSLSGLGNDEVQVRVVGGGVGGITESDANLALASNAVLFGFNVRADAGARKIVEAEGLDMRYYNVIYDIIEDVKKALTGMLGSDLRENILGIAEVRDVFRSPKFGAIAGCMVTEGMVHRNRPIRVLRDDVVIFEGELESLRRFKDDVAEVRAGMECGIGVKSYNDVKVGDKIEVFEKVEVARSL.

Positions 94–253 are disordered; sequence KRSPDEIEAE…QHGFQNPTGP (160 aa). A compositionally biased stretch (basic and acidic residues) spans 95-148; sequence RSPDEIEAERQRELEEQRAAEEAERLKAEEAAARQRAEEEARKAEEAARAKAAE. The segment covering 149–171 has biased composition (low complexity); that stretch reads EAVSAQPAAAVEVAAAEPVAKPA. Basic and acidic residues-rich tracts occupy residues 172–188 and 220–229; these read AAEERKKEEPRRVPKRD and STDEESDGYR. The segment covering 230–244 has biased composition (basic residues); it reads RGGRGGKSKLKKRNQ. The region spanning 337–506 is the tr-type G domain; it reads TRAPVVTVMG…LLQAEVLELK (170 aa). The G1 stretch occupies residues 346–353; the sequence is GHVDHGKT. 346–353 lines the GTP pocket; the sequence is GHVDHGKT. Residues 371–375 form a G2 region; sequence GITQH. Positions 392 to 395 are G3; the sequence is DTPG. GTP contacts are provided by residues 392–396 and 446–449; these read DTPGH and NKID. Residues 446–449 form a G4 region; that stretch reads NKID. The G5 stretch occupies residues 482–484; that stretch reads SAK.

The protein belongs to the TRAFAC class translation factor GTPase superfamily. Classic translation factor GTPase family. IF-2 subfamily.

It is found in the cytoplasm. Functionally, one of the essential components for the initiation of protein synthesis. Protects formylmethionyl-tRNA from spontaneous hydrolysis and promotes its binding to the 30S ribosomal subunits. Also involved in the hydrolysis of GTP during the formation of the 70S ribosomal complex. This is Translation initiation factor IF-2 from Pseudomonas paraeruginosa (strain DSM 24068 / PA7) (Pseudomonas aeruginosa (strain PA7)).